The primary structure comprises 176 residues: Large ribosomal subunit protein eL20 (176 aa).

Residue lysine 11 forms a Glycyl lysine isopeptide (Lys-Gly) (interchain with G-Cter in SUMO2) linkage. Tyrosine 63 bears the Phosphotyrosine mark. Position 71 is a phosphoserine (serine 71). Position 76 is an N6-succinyllysine (lysine 76). Residue serine 123 is modified to Phosphoserine. Glycyl lysine isopeptide (Lys-Gly) (interchain with G-Cter in SUMO2) cross-links involve residues lysine 128 and lysine 170.

The protein belongs to the eukaryotic ribosomal protein eL20 family. In terms of assembly, component of the large ribosomal subunit. Binds IPO9 with high affinity.

The protein resides in the cytoplasm. Functionally, component of the large ribosomal subunit. The ribosome is a large ribonucleoprotein complex responsible for the synthesis of proteins in the cell. The chain is Large ribosomal subunit protein eL20 (Rpl18a) from Mus musculus (Mouse).